The primary structure comprises 325 residues: Homoserine O-succinyltransferase (325 aa).

Cysteine 142 (acyl-thioester intermediate) is an active-site residue. Lysine 163 and serine 191 together coordinate substrate. The Proton acceptor role is filled by histidine 234. The active site involves glutamate 236. Residue arginine 248 participates in substrate binding.

Belongs to the MetA family.

It localises to the cytoplasm. It carries out the reaction L-homoserine + succinyl-CoA = O-succinyl-L-homoserine + CoA. The protein operates within amino-acid biosynthesis; L-methionine biosynthesis via de novo pathway; O-succinyl-L-homoserine from L-homoserine: step 1/1. Transfers a succinyl group from succinyl-CoA to L-homoserine, forming succinyl-L-homoserine. The chain is Homoserine O-succinyltransferase from Bradyrhizobium japonicum.